The primary structure comprises 62 residues: UPF0434 protein Fphi_1862 (62 aa).

Belongs to the UPF0434 family.

This Francisella philomiragia subsp. philomiragia (strain ATCC 25017 / CCUG 19701 / FSC 153 / O#319-036) protein is UPF0434 protein Fphi_1862.